The following is a 252-amino-acid chain: Isoprenyl transferase 2 (252 aa).

D26 is a catalytic residue. A Mg(2+)-binding site is contributed by D26. Substrate contacts are provided by residues 27-30, W31, R39, H43, and 71-73; these read GNGR and SSE. The Proton acceptor role is filled by N74. Residues W75, R77, R194, and 200-202 contribute to the substrate site; that span reads RLS. Position 213 (E213) interacts with Mg(2+).

The protein belongs to the UPP synthase family. Homodimer. Requires Mg(2+) as cofactor.

Catalyzes the condensation of isopentenyl diphosphate (IPP) with allylic pyrophosphates generating different type of terpenoids. The protein is Isoprenyl transferase 2 of Bradyrhizobium diazoefficiens (strain JCM 10833 / BCRC 13528 / IAM 13628 / NBRC 14792 / USDA 110).